A 212-amino-acid polypeptide reads, in one-letter code: Ras-like protein (212 aa).

GTP is bound at residue 15-22; it reads GGGGVGKS. The short motif at 37–45 is the Effector region element; that stretch reads YDPTIEDSY. GTP is bound by residues 62-66 and 121-124; these read DTAGQ and NKCD. Residues Cys-205 and Cys-206 are each lipidated (S-palmitoyl cysteine). Cysteine methyl ester is present on Cys-209. A lipid anchor (S-geranylgeranyl cysteine) is attached at Cys-209. Residues 210-212 constitute a propeptide, removed in mature form; the sequence is IVM.

Belongs to the small GTPase superfamily. Ras family.

The protein resides in the cell membrane. It carries out the reaction GTP + H2O = GDP + phosphate + H(+). With respect to regulation, alternates between an inactive form bound to GDP and an active form bound to GTP. Activated by a guanine nucleotide-exchange factor (GEF) and inactivated by a GTPase-activating protein (GAP). This chain is Ras-like protein (rasA), found in Emericella nidulans (strain FGSC A4 / ATCC 38163 / CBS 112.46 / NRRL 194 / M139) (Aspergillus nidulans).